The sequence spans 350 residues: tRNA uridine(34) hydroxylase (350 aa).

A Rhodanese domain is found at 146 to 240 (DDPDAVFIDM…YARRARAQGL (95 aa)). Cys-200 (cysteine persulfide intermediate) is an active-site residue. The segment covering 319–328 (RRRRAGRENG) has biased composition (basic and acidic residues). A disordered region spans residues 319–350 (RRRRAGRENGNKIFNKSRGRLNSKLSIPDPAE).

The protein belongs to the TrhO family.

The catalysed reaction is uridine(34) in tRNA + AH2 + O2 = 5-hydroxyuridine(34) in tRNA + A + H2O. Its function is as follows. Catalyzes oxygen-dependent 5-hydroxyuridine (ho5U) modification at position 34 in tRNAs. The chain is tRNA uridine(34) hydroxylase from Salmonella newport (strain SL254).